Reading from the N-terminus, the 315-residue chain is tRNA dimethylallyltransferase (315 aa).

Residue 13 to 20 (GPTAVGKT) participates in ATP binding. 15 to 20 (TAVGKT) is a binding site for substrate. The tract at residues 38 to 41 (DSMQ) is interaction with substrate tRNA.

Belongs to the IPP transferase family. In terms of assembly, monomer. Requires Mg(2+) as cofactor.

It catalyses the reaction adenosine(37) in tRNA + dimethylallyl diphosphate = N(6)-dimethylallyladenosine(37) in tRNA + diphosphate. Functionally, catalyzes the transfer of a dimethylallyl group onto the adenine at position 37 in tRNAs that read codons beginning with uridine, leading to the formation of N6-(dimethylallyl)adenosine (i(6)A). The polypeptide is tRNA dimethylallyltransferase (Staphylococcus saprophyticus subsp. saprophyticus (strain ATCC 15305 / DSM 20229 / NCIMB 8711 / NCTC 7292 / S-41)).